The sequence spans 356 residues: Tyrosine recombinase XerS (356 aa).

In terms of domain architecture, Core-binding (CB) spans 16–121; that stretch reads IMPWYVLDYY…ALSSLYKYLT (106 aa). Residues 169 to 354 form the Tyr recombinase domain; the sequence is AFLDYVDKEY…VNDEQKNALD (186 aa). Residues R210, K234, H306, R309, and H332 contribute to the active site. The active-site O-(3'-phospho-DNA)-tyrosine intermediate is Y341.

Belongs to the 'phage' integrase family. XerS subfamily.

The protein localises to the cytoplasm. With respect to regulation, ftsK is required for recombination. In terms of biological role, site-specific tyrosine recombinase, which acts by catalyzing the cutting and rejoining of the recombining DNA molecules. Essential to convert dimers of the bacterial chromosome into monomers to permit their segregation at cell division. This chain is Tyrosine recombinase XerS, found in Streptococcus pyogenes serotype M1.